The sequence spans 879 residues: Levansucrase (879 aa).

Residues 1–37 (MTKEHKKMYKAGKYWAVATLVSASILMEVGVTTHADA) form the signal peptide. 7 repeat units span residues 66 to 81 (DNATSGSTKQESSIAN), 82 to 97 (DNATSGSTKQESSIAN), 98 to 113 (DNATSGSTKQESSIAN), 114 to 129 (DNATSGSTKQESSVAN), 130 to 145 (DNATSGSTKQESSVAN), 146 to 161 (DNATSGSTKQESSVAN), and 162 to 177 (DNATSGSTKQESSVAN). The segment at 66–177 (DNATSGSTKQ…STKQESSVAN (112 aa)) is 7 X 16 AA tandem repeats of D-N-A-T-S-G-S-T-K-Q-E-S-S-[IV]-A-N. Composition is skewed to polar residues over residues 66–180 (DNAT…NDTK) and 189–213 (NTSNTENDNSQLKQTNNEQPSAATQ). The disordered stretch occupies residues 66 to 213 (DNATSGSTKQ…NNEQPSAATQ (148 aa)). The sucrose site is built by Trp311, Asp312, and Ser382. Residue Asp312 is the Nucleophile of the active site. Position 460 (Asp460) interacts with Ca(2+). Arg465 and Asp466 together coordinate sucrose. The Ca(2+) site is built by Gln491, Leu528, Asn530, and Asp562. Sucrose is bound at residue Glu563. Residue Glu565 is the Proton donor/acceptor of the active site. Residue Arg583 participates in sucrose binding. The disordered stretch occupies residues 743 to 830 (SSGLGLKPHQ…TPAKPVQAGQ (88 aa)). Residues 754-821 (VNPSQPTTPA…KPVNPSQPTT (68 aa)) show a composition bias toward polar residues. The LPXTG sorting signal motif lies at 841–845 (LPQTG). Residue Thr844 is modified to Pentaglycyl murein peptidoglycan amidated threonine. A propeptide spans 845–879 (GENNSQSQTMSFIGILLAMFGSLLGFLGIKKRRND) (removed by sortase).

Belongs to the glycosyl hydrolase 68 family.

The protein localises to the secreted. It is found in the cell wall. It carries out the reaction [6)-beta-D-fructofuranosyl-(2-&gt;](n) alpha-D-glucopyranoside + sucrose = [6)-beta-D-fructofuranosyl-(2-&gt;](n+1) alpha-D-glucopyranoside + D-glucose. Its activity is regulated as follows. Ca(2+) may play an important structural role and promote stability of levansucrase. Fructosyltransferase that catalyzes the polymerization of the fructose moiety of sucrose to produce levan polymer and the fructo-oligosaccharide (FOS) 1-kestose. Also displays sucrose hydrolase activity. The polypeptide is Levansucrase (Fructilactobacillus sanfranciscensis (Lactobacillus sanfranciscensis)).